Consider the following 334-residue polypeptide: Large ribosomal subunit protein uL3 (334 aa).

Over residues 1 to 10 (MGMKKNRPRR) the composition is skewed to basic residues. The tract at residues 1-21 (MGMKKNRPRRGSLAFSPRKRA) is disordered.

The protein belongs to the universal ribosomal protein uL3 family. In terms of assembly, part of the 50S ribosomal subunit. Forms a cluster with proteins L14 and L24e.

Functionally, one of the primary rRNA binding proteins, it binds directly near the 3'-end of the 23S rRNA, where it nucleates assembly of the 50S subunit. The polypeptide is Large ribosomal subunit protein uL3 (Methanococcus maripaludis (strain C5 / ATCC BAA-1333)).